We begin with the raw amino-acid sequence, 300 residues long: Very-long-chain enoyl-CoA reductase (300 aa).

Residues 91–111 (SLVFICEYAGPLFVYPIFYFL) traverse the membrane as a helical segment. N-linked (GlcNAc...) asparagine glycosylation occurs at asparagine 163. A helical membrane pass occupies residues 191-211 (VYLGLGLWIIGEVFNYICHIQ). Residue asparagine 238 is glycosylated (N-linked (GlcNAc...) asparagine). A helical transmembrane segment spans residues 243–263 (ILSWIGFSILTQTLTSWIFAL).

This sequence belongs to the steroid 5-alpha reductase family.

It localises to the endoplasmic reticulum membrane. It carries out the reaction a very-long-chain 2,3-saturated fatty acyl-CoA + NADP(+) = a very-long-chain (2E)-enoyl-CoA + NADPH + H(+). Its pathway is lipid metabolism; fatty acid biosynthesis. Functionally, catalyzes the last of the four reactions of the long-chain fatty acids elongation cycle. This endoplasmic reticulum-bound enzymatic process, allows the addition of 2 carbons to the chain of long- and very long-chain fatty acids/VLCFAs per cycle. This enzyme reduces the trans-2,3-enoyl-CoA fatty acid intermediate to an acyl-CoA that can be further elongated by entering a new cycle of elongation. Thereby, it participates in the production of VLCFAs of different chain lengths that are involved in multiple biological processes as precursors of membrane lipids and lipid mediators. The polypeptide is Very-long-chain enoyl-CoA reductase (gpsn2) (Dictyostelium discoideum (Social amoeba)).